The chain runs to 344 residues: MARDLIGPALPPGFKARGTAEDEERDPSPGPALPPNYKSSSSDSSDSDEDSSSLYEEGNQESEEDDTGPTARKQRKNQDDDNDDDDDDDDDDGFFGPALPPGFKKQDDSPPRPIIGPALPPGFIKSTQKSDKGRDDPGQQETDSSEDEDIIGPMPAKGPVNYNVTTEFEKRAQRMKEKLTKGDDDSSKPIVRESWMTELPAEMKDFGLGPRTFKRRADDTSGDRSVWTDTPADRERKAKETQEARKSSSKKDEEHILSGRDKRLAEQVSSYNESKRSESLMDIHHKKLKSKAAEDKNKPQERIPFDRDKDLKVNRFDEAQKKALIKKSRELNTRFSHGKGNMFL.

Residues 1-309 (MARDLIGPAL…QERIPFDRDK (309 aa)) form a disordered region. Position 2 is an N-acetylalanine (Ala2). Positions 7-12 (GPALPP) match the GPALPP motif 1 motif. Residue Ser28 is modified to Phosphoserine. Positions 30–35 (GPALPP) match the GPALPP motif 2 motif. Composition is skewed to acidic residues over residues 58-67 (GNQESEEDDT) and 80-93 (DDND…DDDG). The GPALPP motif 3 motif lies at 96–101 (GPALPP). Ser109 carries the phosphoserine modification. Positions 111-120 (PRPIIGPALP) are enriched in pro residues. Residues 116–121 (GPALPP) carry the GPALPP motif 4 motif. Positions 128 to 137 (QKSDKGRDDP) are enriched in basic and acidic residues. Phosphothreonine is present on Thr142. 2 positions are modified to phosphoserine: Ser144 and Ser145. 4 stretches are compositionally biased toward basic and acidic residues: residues 167–191 (EFEK…KPIV), 231–265 (PADR…KRLA), 273–283 (ESKRSESLMDI), and 291–309 (KAAE…DRDK). Lys275 participates in a covalent cross-link: Glycyl lysine isopeptide (Lys-Gly) (interchain with G-Cter in SUMO2). Lys312 is covalently cross-linked (Glycyl lysine isopeptide (Lys-Gly) (interchain with G-Cter in SUMO2)).

This Pongo abelii (Sumatran orangutan) protein is GPALPP motifs-containing protein 1 (GPALPP1).